A 521-amino-acid chain; its full sequence is Tubulin-specific chaperone E (521 aa).

In terms of domain architecture, CAP-Gly spans 24-68 (GPVPPTAGVWLGVEWDHPERGKHDGSHDGVRYFTCRHPTGGSFVR). LRR repeat units lie at residues 147–168 (FVQS…AAIT), 173–194 (SLQE…SSLS), 199–220 (HLRV…HCAP), 224–245 (QVEE…EHVL), 247–268 (ALTV…EISH), 271–292 (RLER…DVPA), and 301–322 (ALKE…NELE). Residues 335–377 (NPLLHKEKNLETARQIMIARLGQLELLDMRQILSDERRGAELD) form the LRRCT domain.

It belongs to the TBCE family. In terms of assembly, supercomplex made of cofactors A to E. Cofactors A and D function by capturing and stabilizing tubulin in a quasi-native conformation. Cofactor E binds to the cofactor D-tubulin complex; interaction with cofactor C then causes the release of tubulin polypeptides that are committed to the native state.

It localises to the cytoplasm. Its subcellular location is the cytoskeleton. In terms of biological role, tubulin-folding protein; involved in the second step of the tubulin folding pathway. This chain is Tubulin-specific chaperone E (tbce), found in Danio rerio (Zebrafish).